A 138-amino-acid polypeptide reads, in one-letter code: ATP synthase epsilon chain 1 (138 aa).

The protein belongs to the ATPase epsilon chain family. F-type ATPases have 2 components, CF(1) - the catalytic core - and CF(0) - the membrane proton channel. CF(1) has five subunits: alpha(3), beta(3), gamma(1), delta(1), epsilon(1). CF(0) has three main subunits: a, b and c.

It localises to the cell inner membrane. Its function is as follows. Produces ATP from ADP in the presence of a proton gradient across the membrane. The protein is ATP synthase epsilon chain 1 of Syntrophotalea carbinolica (strain DSM 2380 / NBRC 103641 / GraBd1) (Pelobacter carbinolicus).